A 186-amino-acid chain; its full sequence is Translation initiation factor IF-3 (186 aa).

The segment at 1–21 is disordered; it reads MINRSSGKDRDRSRSGDKELR.

This sequence belongs to the IF-3 family. Monomer.

Its subcellular location is the cytoplasm. Functionally, IF-3 binds to the 30S ribosomal subunit and shifts the equilibrium between 70S ribosomes and their 50S and 30S subunits in favor of the free subunits, thus enhancing the availability of 30S subunits on which protein synthesis initiation begins. In Borrelia turicatae (strain 91E135), this protein is Translation initiation factor IF-3.